The chain runs to 445 residues: Xylose isomerase (445 aa).

Catalysis depends on residues His99 and Asp102. Residues Glu230, Glu266, His269, Asp294, Asp305, Asp307, and Asp337 each contribute to the Mg(2+) site.

The protein belongs to the xylose isomerase family. Homotetramer. Mg(2+) serves as cofactor.

Its subcellular location is the cytoplasm. The catalysed reaction is alpha-D-xylose = alpha-D-xylulofuranose. The protein is Xylose isomerase of Geobacillus thermodenitrificans (strain NG80-2).